A 1809-amino-acid chain; its full sequence is Stereocilin (1809 aa).

A signal peptide spans 1–22 (MALSLQPQLLLLLSLLPQEVTS). Residues Asn-63, Asn-200, Asn-295, Asn-352, and Asn-364 are each glycosylated (N-linked (GlcNAc...) asparagine). Positions 376–426 (PATPRPPPTTPRPPPTTPQPPPTTTQPIPDTTQPPPVTPRPPPTTPQPPPS) are disordered. Pro residues-rich tracts occupy residues 378 to 399 (TPRP…PPTT) and 407 to 426 (TQPP…PPPS). Residues Asn-467, Asn-516, Asn-580, Asn-605, Asn-696, Asn-860, Asn-952, Asn-1000, Asn-1213, and Asn-1308 are each glycosylated (N-linked (GlcNAc...) asparagine).

It belongs to the stereocilin family. As to expression, strongly expressed in the inner ear, detected in the testis, and barely detected in the eye. Detected in the six sensory areas of the inner ear by immunofluorescence. Expressed only in the sensory hair cells and associated with the stereocilia, the stiff microvilli forming the structure for mechanoreception of sound stimulation.

It is found in the cell surface. Its subcellular location is the cell projection. It localises to the kinocilium. The protein resides in the stereocilium. Functionally, essential to the formation of horizontal top connectors between outer hair cell stereocilia. The sequence is that of Stereocilin (Strc) from Mus musculus (Mouse).